A 94-amino-acid polypeptide reads, in one-letter code: Putative regulatory protein LEPBI_I0950 (94 aa).

It belongs to the RemA family.

This is Putative regulatory protein LEPBI_I0950 from Leptospira biflexa serovar Patoc (strain Patoc 1 / ATCC 23582 / Paris).